A 270-amino-acid polypeptide reads, in one-letter code: Formamidopyrimidine-DNA glycosylase (270 aa).

Pro-2 functions as the Schiff-base intermediate with DNA in the catalytic mechanism. The active-site Proton donor is the Glu-3. The active-site Proton donor; for beta-elimination activity is Lys-58. DNA is bound by residues His-90, Arg-109, and Arg-152. Residues 237 to 270 (RVYGREGEPCQCGGVVKRIVQGGRSTFFCPRCQK) form an FPG-type zinc finger. Arg-260 serves as the catalytic Proton donor; for delta-elimination activity.

This sequence belongs to the FPG family. As to quaternary structure, monomer. It depends on Zn(2+) as a cofactor.

It carries out the reaction Hydrolysis of DNA containing ring-opened 7-methylguanine residues, releasing 2,6-diamino-4-hydroxy-5-(N-methyl)formamidopyrimidine.. It catalyses the reaction 2'-deoxyribonucleotide-(2'-deoxyribose 5'-phosphate)-2'-deoxyribonucleotide-DNA = a 3'-end 2'-deoxyribonucleotide-(2,3-dehydro-2,3-deoxyribose 5'-phosphate)-DNA + a 5'-end 5'-phospho-2'-deoxyribonucleoside-DNA + H(+). Its function is as follows. Involved in base excision repair of DNA damaged by oxidation or by mutagenic agents. Acts as a DNA glycosylase that recognizes and removes damaged bases. Has a preference for oxidized purines, such as 7,8-dihydro-8-oxoguanine (8-oxoG). Has AP (apurinic/apyrimidinic) lyase activity and introduces nicks in the DNA strand. Cleaves the DNA backbone by beta-delta elimination to generate a single-strand break at the site of the removed base with both 3'- and 5'-phosphates. The polypeptide is Formamidopyrimidine-DNA glycosylase (Novosphingobium aromaticivorans (strain ATCC 700278 / DSM 12444 / CCUG 56034 / CIP 105152 / NBRC 16084 / F199)).